The chain runs to 298 residues: GTP cyclohydrolase FolE2 (298 aa).

Belongs to the GTP cyclohydrolase IV family.

It carries out the reaction GTP + H2O = 7,8-dihydroneopterin 3'-triphosphate + formate + H(+). Its pathway is cofactor biosynthesis; 7,8-dihydroneopterin triphosphate biosynthesis; 7,8-dihydroneopterin triphosphate from GTP: step 1/1. Converts GTP to 7,8-dihydroneopterin triphosphate. This Neisseria meningitidis serogroup A / serotype 4A (strain DSM 15465 / Z2491) protein is GTP cyclohydrolase FolE2.